Consider the following 356-residue polypeptide: Glycerol-1-phosphate dehydrogenase [NAD(P)+] (356 aa).

NAD(+)-binding positions include 103–107 (GRSID) and 125–128 (TAAS). Aspartate 130 contacts substrate. Serine 134 contributes to the NAD(+) binding site. Substrate is bound at residue aspartate 177. Zn(2+) contacts are provided by aspartate 177 and histidine 257. Histidine 261 lines the substrate pocket. Position 273 (histidine 273) interacts with Zn(2+).

The protein belongs to the glycerol-1-phosphate dehydrogenase family. Requires Zn(2+) as cofactor.

Its subcellular location is the cytoplasm. The catalysed reaction is sn-glycerol 1-phosphate + NAD(+) = dihydroxyacetone phosphate + NADH + H(+). The enzyme catalyses sn-glycerol 1-phosphate + NADP(+) = dihydroxyacetone phosphate + NADPH + H(+). The protein operates within membrane lipid metabolism; glycerophospholipid metabolism. In terms of biological role, catalyzes the NAD(P)H-dependent reduction of dihydroxyacetonephosphate (DHAP or glycerone phosphate) to glycerol 1-phosphate (G1P). The G1P thus generated is used as the glycerophosphate backbone of phospholipids in the cellular membranes of Archaea. The polypeptide is Glycerol-1-phosphate dehydrogenase [NAD(P)+] (Methanosarcina barkeri (strain Fusaro / DSM 804)).